We begin with the raw amino-acid sequence, 104 residues long: L-rhamnose mutarotase (104 aa).

Tyr-18 contributes to the substrate binding site. His-22 acts as the Proton donor in catalysis. Substrate is bound by residues Tyr-41 and 76–77 (WW).

Belongs to the rhamnose mutarotase family. As to quaternary structure, homodimer.

It is found in the cytoplasm. It carries out the reaction alpha-L-rhamnose = beta-L-rhamnose. It functions in the pathway carbohydrate metabolism; L-rhamnose metabolism. Involved in the anomeric conversion of L-rhamnose. The protein is L-rhamnose mutarotase of Pectobacterium carotovorum subsp. carotovorum (strain PC1).